Reading from the N-terminus, the 469-residue chain is DNA polymerase delta subunit 2 (469 aa).

Methionine 1 bears the N-acetylmethionine mark. Serine 257 carries the phosphoserine modification.

The protein belongs to the DNA polymerase delta/II small subunit family. In terms of assembly, component of both the DNA polymerase delta and DNA polymerase zeta complexes. Component of the tetrameric DNA polymerase delta complex (Pol-delta4), which consists of POLD1/p125, POLD2/p50, POLD3/p66/p68 and POLD4/p12, with POLD1 bearing DNA polymerase and 3' to 5' proofreading exonuclease activities. Within Pol-delta4, directly interacts with POLD1, POLD3 and POLD4. Following stress caused by DNA damaging agents or by replication stress, POLD4 is degraded and Pol-delta4 is converted into a trimeric form of the complex (Pol-delta3), which consists of POLD1, POLD2 and POLD3. Pol-delta3 is the major form occurring at S phase replication sites, as well as DNA damage sites. Also observed as a dimeric complex with POLD2 (Pol-delta2 complex). Pol-delta2 is relatively insensitive to the PCNA stimulation (2-5-fold) compared to Pol-delta4 that is stimulated by over 50-fold. Contrary to the other components of Pol-delta4, does not directly interact with PCNA. As POLD1 and POLD4, directly interacts with WRNIP1; this interaction stimulates DNA polymerase delta-mediated DNA synthesis, independently of the presence of PCNA. This stimulation may be due predominantly to an increase of initiation frequency and also to increased processivity. Directly interacts with POLDIP2 and POLDIP3. Directly interacts with KCTD13/PDIP1; in the presence of PCNA, this interaction may stimulate DNA polymerase activity. Component of the tetrameric Pol-zeta complex (Pol-zeta4), which consists of REV3L, MAD2L2, POLD2 and POLD3, with REV3L bearing DNA polymerase catalytic activity. Interacts with KCTD10.

It is found in the nucleus. Its function is as follows. Accessory component of both the DNA polymerase delta complex and the DNA polymerase zeta complex. As a component of the trimeric and tetrameric DNA polymerase delta complexes (Pol-delta3 and Pol-delta4, respectively), plays a role in high fidelity genome replication, including in lagging strand synthesis, and repair. Pol-delta3 and Pol-delta4 are characterized by the absence or the presence of POLD4. They exhibit differences in catalytic activity. Most notably, Pol-delta3 shows higher proofreading activity than Pol-delta4. Although both Pol-delta3 and Pol-delta4 process Okazaki fragments in vitro, Pol-delta3 may also be better suited to fulfill this task, exhibiting near-absence of strand displacement activity compared to Pol-delta4 and stalling on encounter with the 5'-blocking oligonucleotides. Pol-delta3 idling process may avoid the formation of a gap, while maintaining a nick that can be readily ligated. Along with DNA polymerase kappa, DNA polymerase delta carries out approximately half of nucleotide excision repair (NER) synthesis following UV irradiation. Under conditions of DNA replication stress, required for the repair of broken replication forks through break-induced replication (BIR). Involved in the translesion synthesis (TLS) of templates carrying O6-methylguanine or abasic sites performed by Pol-delta4, independently of DNA polymerase zeta (REV3L) or eta (POLH). Facilitates abasic site bypass by DNA polymerase delta by promoting extension from the nucleotide inserted opposite the lesion. Also involved in TLS as a component of the DNA polymerase zeta complex. Along with POLD3, dramatically increases the efficiency and processivity of DNA synthesis of the DNA polymerase zeta complex compared to the minimal zeta complex, consisting of only REV3L and REV7. This Mus musculus (Mouse) protein is DNA polymerase delta subunit 2 (Pold2).